Here is a 254-residue protein sequence, read N- to C-terminus: Small ribosomal subunit protein uS2 (254 aa).

This sequence belongs to the universal ribosomal protein uS2 family.

The sequence is that of Small ribosomal subunit protein uS2 from Legionella pneumophila subsp. pneumophila (strain Philadelphia 1 / ATCC 33152 / DSM 7513).